A 214-amino-acid chain; its full sequence is Ras-related protein Rab-11A (214 aa).

Residues 20-28, 39-45, 68-72, 126-129, and 156-158 contribute to the GTP site; these read GDSGVGKSN, SLETKST, DTAGQ, NKSD, and SAL. The short motif at 42 to 50 is the Effector region element; that stretch reads TKSTIGVEF. Residues Cys-213 and Cys-214 are each lipidated (S-geranylgeranyl cysteine).

This sequence belongs to the small GTPase superfamily. Rab family.

The protein resides in the contractile vacuole membrane. In terms of biological role, required for normal contractile vacuole structure and function. Cells expressing a dominant negative rab11A exhibit a more extensive contractile vacuole network and enlarged contractile vacuole bladders. These cells exhibit a functional defect in osmotic regulation where cells immersed in water become rounded and detach from the surface, and contain swollen contractile vacuoles. The polypeptide is Ras-related protein Rab-11A (rab11A) (Dictyostelium discoideum (Social amoeba)).